An 86-amino-acid chain; its full sequence is MRSIMVQSAKTDSVNQQTIEGLKLQIKKLNSKAGQLKMDLHDLAEGLPIDYQNLTALAAETYEIYRHLDELKSQLKSLEKNHDMGY.

Belongs to the UPF0437 family.

This is UPF0437 protein Ava_4254 from Trichormus variabilis (strain ATCC 29413 / PCC 7937) (Anabaena variabilis).